The chain runs to 131 residues: Protein DfrA (131 aa).

This sequence belongs to the RutC family.

This Myxococcus xanthus protein is Protein DfrA (dfrA).